The primary structure comprises 886 residues: Adhesion G protein-coupled receptor E1 (886 aa).

The N-terminal stretch at 1–20 (MRGFNLLLFWGCCVMHSWEG) is a signal peptide. The Extracellular segment spans residues 21–599 (HIRPTRKPNT…IMASGELTMD (579 aa)). The EGF-like 1 domain occupies 31 to 79 (KGNNCRDSTLCPAYATCTNTVDSYYCACKQGFLSSNGQNHFKDPGVRCK). Cystine bridges form between cysteine 35-cysteine 47, cysteine 41-cysteine 56, cysteine 58-cysteine 78, cysteine 84-cysteine 97, cysteine 91-cysteine 106, cysteine 108-cysteine 130, cysteine 136-cysteine 148, cysteine 142-cysteine 157, cysteine 159-cysteine 170, cysteine 176-cysteine 188, cysteine 182-cysteine 197, cysteine 199-cysteine 219, cysteine 225-cysteine 235, cysteine 229-cysteine 244, cysteine 246-cysteine 266, cysteine 272-cysteine 285, cysteine 279-cysteine 294, and cysteine 296-cysteine 315. The region spanning 80-131 (DIDECSQSPQPCGPNSSCKNLSGRYKCSCLDGFSSPTGNDWVPGKPGNFSCT) is the EGF-like 2; calcium-binding domain. N-linked (GlcNAc...) asparagine glycans are attached at residues asparagine 94, asparagine 99, and asparagine 127. The region spanning 132-171 (DINECLTSSVCPEHSDCVNSMGSYSCSCQVGFISRNSTCE) is the EGF-like 3; calcium-binding domain. N-linked (GlcNAc...) asparagine glycosylation occurs at asparagine 167. In terms of domain architecture, EGF-like 4; calcium-binding spans 172–220 (DVDECADPRACPEHATCNNTVGNYSCFCNPGFESSSGHLSFQGLKASCE). Residues asparagine 189 and asparagine 194 are each glycosylated (N-linked (GlcNAc...) asparagine). Residues 221-267 (DIDECTEMCPINSTCTNTPGSYFCTCHPGFAPSNGQLNFTDQGVECR) enclose the EGF-like 5; calcium-binding domain. N-linked (GlcNAc...) asparagine glycans are attached at residues asparagine 232 and asparagine 258. The region spanning 268 to 316 (DIDECRQDPSTCGPNSICTNALGSYSCGCIAGFHPNPEGSQKDGNFSCQ) is the EGF-like 6; calcium-binding domain. Asparagine 312, asparagine 366, asparagine 375, and asparagine 448 each carry an N-linked (GlcNAc...) asparagine glycan. Positions 431-597 (EYLDIESKVI…AVIMASGELT (167 aa)) constitute a GAIN-B domain. 2 disulfides stabilise this stretch: cysteine 550–cysteine 579 and cysteine 567–cysteine 581. A GPS region spans residues 550–597 (CVSWSTDVKGGRWTSFGCVILEASETYTICSCNQMANLAVIMASGELT). Residues 600 to 627 (FSLYIISHVGIIISLVCLVLAIATFLLC) form a helical membrane-spanning segment. The Cytoplasmic portion of the chain corresponds to 628–634 (RSIRNHN). Residues 635 to 656 (TYLHLHLCVCLLLAKTLFLAGI) form a helical membrane-spanning segment. Over 657–666 (HKTDNKMGCA) the chain is Extracellular. The helical transmembrane segment at 667 to 690 (IIAGFLHYLFLACFFWMLVEAVIL) threads the bilayer. Residues 691-709 (FLMVRNLKVVNYFSSRNIK) are Cytoplasmic-facing. Residues 710 to 731 (MLHICAFGYGLPMLVVVISASV) traverse the membrane as a helical segment. The Extracellular portion of the chain corresponds to 732–747 (QPQGYGMHNRCWLNTE). A helical transmembrane segment spans residues 748-776 (TGFIWSFLGPVCTVIVINSLLLTWTLWIL). Over 777 to 794 (RQRLSSVNAEVSTLKDTR) the chain is Cytoplasmic. A helical membrane pass occupies residues 795–814 (LLTFKAFAQLFILGCSWVLG). Over 815–829 (IFQIGPVAGVMAYLF) the chain is Extracellular. The chain crosses the membrane as a helical span at residues 830–852 (TIINSLQGAFIFLIHCLLNGQVR). Topologically, residues 853 to 886 (EEYKRWITGKTKPSSQSQTSRILLSSMPSASKTG) are cytoplasmic. Residues 862 to 886 (KTKPSSQSQTSRILLSSMPSASKTG) are disordered. Polar residues predominate over residues 863 to 886 (TKPSSQSQTSRILLSSMPSASKTG).

It belongs to the G-protein coupled receptor 2 family. Adhesion G-protein coupled receptor (ADGR) subfamily. As to expression, expression is restricted to eosinophils.

The protein localises to the cell membrane. Functionally, orphan receptor involved in cell adhesion and probably in cell-cell interactions specifically involving cells of the immune system. May play a role in regulatory T-cells (Treg) development. This is Adhesion G protein-coupled receptor E1 from Homo sapiens (Human).